A 269-amino-acid chain; its full sequence is Embryonic polyadenylate-binding protein 2 (269 aa).

A disordered region spans residues 26-54 (EAQGWGAWGRTEKTSLVPSAGSDKEAEEN). Residues 139-216 (RSVYVGNVDY…RVIKVLPKRT (78 aa)) form the RRM domain. Positions 240-269 (LQGSLQRKPRLRPHGQSRGRGRASPWFSPY) are disordered. Residues 246–260 (RKPRLRPHGQSRGRG) show a composition bias toward basic residues.

It localises to the cytoplasm. Its function is as follows. Binds the poly(A) tail of mRNA. The polypeptide is Embryonic polyadenylate-binding protein 2 (Pabpn1l) (Rattus norvegicus (Rat)).